The chain runs to 388 residues: F-box protein ETP2 (388 aa).

In terms of domain architecture, F-box spans 2-48 (KTIQEQLPNDLVEEILCRVPATSLRRLRSTCKAWNRLFKGDRILASK).

In terms of assembly, interacts with EIN2 (via C-terminus).

In terms of biological role, negative regulator of EIN2 protein stability. This is F-box protein ETP2 from Arabidopsis thaliana (Mouse-ear cress).